Here is a 387-residue protein sequence, read N- to C-terminus: Diphthine methyltransferase (387 aa).

WD repeat units lie at residues 62-102 (NTYG…KDDF), 119-159 (EKDV…VQFT), 195-237 (PHEL…FIWS), 241-286 (IHDA…ESIF), and 357-387 (GHDS…TWIV).

The protein belongs to the DPH7 family. Interacts with CAN1 and RTT10.

It localises to the cytoplasm. Its subcellular location is the endosome. It catalyses the reaction diphthine methyl ester-[translation elongation factor 2] + H2O = diphthine-[translation elongation factor 2] + methanol + H(+). The protein operates within protein modification; peptidyl-diphthamide biosynthesis. Functionally, catalyzes the demethylation of diphthine methyl ester to form diphthine, an intermediate in diphthamide biosynthesis, a post-translational modification of histidine which occurs in translation elongation factor 2 (EFT1 and EFT2). Also plays a role in the regulation of the retromer complex and is required for the recycling from endosomes of plasma membrane proteins like CAN1 and MUP1. Identified in a screen for mutants with decreased levels of rDNA transcription. This is Diphthine methyltransferase (RRT2) from Saccharomyces cerevisiae (strain ATCC 204508 / S288c) (Baker's yeast).